A 136-amino-acid polypeptide reads, in one-letter code: Gilles de la Tourette syndrome chromosomal region candidate gene 1 protein (136 aa).

Residues Ala-73–Cys-93 traverse the membrane as a helical segment.

Its subcellular location is the membrane. This chain is Gilles de la Tourette syndrome chromosomal region candidate gene 1 protein (GTSCR1), found in Homo sapiens (Human).